Here is a 277-residue protein sequence, read N- to C-terminus: Pantothenate synthetase (277 aa).

26–33 contacts ATP; that stretch reads MGYLHQGH. Histidine 33 acts as the Proton donor in catalysis. Residue glutamine 57 participates in (R)-pantoate binding. Glutamine 57 lines the beta-alanine pocket. Position 143-146 (143-146) interacts with ATP; it reads GQKD. A (R)-pantoate-binding site is contributed by glutamine 149. Residues valine 172 and 180 to 183 contribute to the ATP site; that span reads LSSR.

It belongs to the pantothenate synthetase family. In terms of assembly, homodimer.

It localises to the cytoplasm. It catalyses the reaction (R)-pantoate + beta-alanine + ATP = (R)-pantothenate + AMP + diphosphate + H(+). Its pathway is cofactor biosynthesis; (R)-pantothenate biosynthesis; (R)-pantothenate from (R)-pantoate and beta-alanine: step 1/1. In terms of biological role, catalyzes the condensation of pantoate with beta-alanine in an ATP-dependent reaction via a pantoyl-adenylate intermediate. This is Pantothenate synthetase from Chloroflexus aggregans (strain MD-66 / DSM 9485).